The chain runs to 443 residues: FLYWCH-type zinc finger-containing protein peb-1 (443 aa).

The disordered stretch occupies residues 22-49; it reads KPGSSDISSSSTDTSAISPISVSSMPLS. The segment covering 25–42 has biased composition (low complexity); that stretch reads SSDISSSSTDTSAISPIS. Residues 46 to 203 constitute a DNA-binding region (required for DNA-binding); that stretch reads MPLSPDKEKK…RNKDGKPKKP (158 aa). The FLYWCH-type zinc-finger motif lies at 69-135; that stretch reads IVTSFKGYQK…NACTKGSHNH (67 aa). The segment at 251–271 is disordered; the sequence is PTIQIPQPIPTPIQHQQQEQS.

The protein localises to the nucleus. Functionally, putative transcription factor. Binds to specific sequence motif 5'-[TC][AGT]TGCC[GA][AT]-3' in regulatory elements of target genes such as myosin myo-2. May modulate gene expression, perhaps acting in opposition to transcription factor pha-4. Involved in morphogenesis, perhaps especially in formation of the pharynx. Plays roles in molting, feeding and morphology. This chain is FLYWCH-type zinc finger-containing protein peb-1, found in Caenorhabditis elegans.